A 248-amino-acid polypeptide reads, in one-letter code: Gamma-glutamyl peptidase 2 (248 aa).

The region spanning 17-212 (SEFVKEMYGG…IDRVHKIKFV (196 aa)) is the Glutamine amidotransferase type-1 domain. Cys-101 (nucleophile) is an active-site residue. Residues His-191 and Glu-193 contribute to the active site.

The protein belongs to the peptidase C26 family.

It is found in the cytoplasm. Its subcellular location is the cytosol. It carries out the reaction an S-[(1E)-1-(hydroxyimino)-omega-(methylsulfanyl)alkyl]-L-glutathione + H2O = an S-[(1E)-1-(hydroxyimino)-omega-(methylsulfanyl)alkyl]-L-cysteinylglycine + L-glutamate. It catalyses the reaction (E)-1-(glutathione-S-yl)-2-(1H-indol-3-yl)acetohydroximate + H2O = (E)-1-(glycyl-L-cystein-S-yl)-2-(1H-indol-3-yl)acetohydroximate + L-glutamate. The catalysed reaction is 2-(glutathion-S-yl)-2-(1H-indol-3-yl)acetonitrile + H2O = 2-(glycyl-L-cystein-S-yl)-2-(1H-indol-3-yl)acetonitrile + L-glutamate. The enzyme catalyses (Z)-1-(glutathione-S-yl)-2-phenylacetohydroximate + H2O = (Z)-1-(glycyl-L-cystein-S-yl)-2-phenylacetohydroximate + L-glutamate. It functions in the pathway secondary metabolite biosynthesis. Involved in glucosinolate biosynthesis. Hydrolyzes the gamma-glutamyl peptide bond of several glutathione (GSH) conjugates to produce Cys-Gly conjugates related to glucosinolates. The gamma-Glu-Cys-Gly-GSH conjugates are the sulfur-donating molecule in glucosinolate biosynthesis. This chain is Gamma-glutamyl peptidase 2, found in Arabidopsis thaliana (Mouse-ear cress).